The sequence spans 470 residues: ATP synthase subunit beta (470 aa).

Gly-155–Thr-162 is a binding site for ATP.

The protein belongs to the ATPase alpha/beta chains family. As to quaternary structure, F-type ATPases have 2 components, CF(1) - the catalytic core - and CF(0) - the membrane proton channel. CF(1) has five subunits: alpha(3), beta(3), gamma(1), delta(1), epsilon(1). CF(0) has three main subunits: a(1), b(2) and c(9-12). The alpha and beta chains form an alternating ring which encloses part of the gamma chain. CF(1) is attached to CF(0) by a central stalk formed by the gamma and epsilon chains, while a peripheral stalk is formed by the delta and b chains.

Its subcellular location is the cell inner membrane. The catalysed reaction is ATP + H2O + 4 H(+)(in) = ADP + phosphate + 5 H(+)(out). Functionally, produces ATP from ADP in the presence of a proton gradient across the membrane. The catalytic sites are hosted primarily by the beta subunits. This Oleidesulfovibrio alaskensis (strain ATCC BAA-1058 / DSM 17464 / G20) (Desulfovibrio alaskensis) protein is ATP synthase subunit beta.